The sequence spans 447 residues: Phosphoglucosamine mutase (447 aa).

The Phosphoserine intermediate role is filled by Ser102. 4 residues coordinate Mg(2+): Ser102, Asp241, Asp243, and Asp245. Position 102 is a phosphoserine (Ser102).

Belongs to the phosphohexose mutase family. The cofactor is Mg(2+). In terms of processing, activated by phosphorylation.

The catalysed reaction is alpha-D-glucosamine 1-phosphate = D-glucosamine 6-phosphate. In terms of biological role, catalyzes the conversion of glucosamine-6-phosphate to glucosamine-1-phosphate. This chain is Phosphoglucosamine mutase, found in Pseudoalteromonas atlantica (strain T6c / ATCC BAA-1087).